The chain runs to 21 residues: Agglutinin beta-1 chain (21 aa).

Polar residues predominate over residues 1–10 (NGPNGKSQSI). The disordered stretch occupies residues 1–21 (NGPNGKSQSIIVGPWGDRVTN).

It belongs to the jacalin lectin family. Formed of four alpha chains and four beta chains.

Its function is as follows. D-galactose-specific lectin, binds the T-antigen structure Gal-beta1,3-GalNAc. The chain is Agglutinin beta-1 chain from Maclura pomifera (Osage orange).